The primary structure comprises 149 residues: MQIILLNDVDHLGEKGEVHEVADGYGRNYLIPQGLARVATDGAIRQLRDEQQQQARKEAAKKEQVEELKDELEDMQVVFTAKVGEDNRIFGTVTTQQIAVELSNRGFNIDRRDIELDEDIRFVGAYTASIDLGYGIEATLDIQVIPESG.

It belongs to the bacterial ribosomal protein bL9 family.

Functionally, binds to the 23S rRNA. The sequence is that of Large ribosomal subunit protein bL9 from Salinibacter ruber (strain DSM 13855 / M31).